Consider the following 503-residue polypeptide: AMP phosphorylase (503 aa).

Residues Gly-168, 194 to 199 (SRAITS), and Thr-203 contribute to the AMP site. Asp-256 serves as the catalytic Proton donor. Ser-264 and Lys-288 together coordinate AMP.

The protein belongs to the thymidine/pyrimidine-nucleoside phosphorylase family. Type 2 subfamily.

The enzyme catalyses AMP + phosphate = alpha-D-ribose 1,5-bisphosphate + adenine. The catalysed reaction is CMP + phosphate = cytosine + alpha-D-ribose 1,5-bisphosphate. It catalyses the reaction UMP + phosphate = alpha-D-ribose 1,5-bisphosphate + uracil. Its function is as follows. Catalyzes the conversion of AMP and phosphate to adenine and ribose 1,5-bisphosphate (R15P). Exhibits phosphorylase activity toward CMP and UMP in addition to AMP. Functions in an archaeal AMP degradation pathway, together with R15P isomerase and RubisCO. The chain is AMP phosphorylase from Thermococcus sibiricus (strain DSM 12597 / MM 739).